The chain runs to 78 residues: Short neurotoxin OH-5 (78 aa).

An N-terminal signal peptide occupies residues 1 to 21; it reads MKNLLLTFLVVTIVCLDLGYT. 4 cysteine pairs are disulfide-bonded: cysteine 24–cysteine 40, cysteine 33–cysteine 58, cysteine 62–cysteine 70, and cysteine 71–cysteine 76.

It belongs to the three-finger toxin family. Short-chain subfamily. In terms of tissue distribution, expressed by the venom gland.

The protein localises to the secreted. In terms of biological role, this three-finger toxin binds and inhibits the nicotinic acetylcholine receptor (nAChR). In Ophiophagus hannah (King cobra), this protein is Short neurotoxin OH-5.